The sequence spans 207 residues: Negative modulator of initiation of replication (207 aa).

The span at 43–54 (ATPITSSVTPSA) shows a compositional bias: polar residues. The segment at 43-63 (ATPITSSVTPSAPRQEAVNDE) is disordered.

This sequence belongs to the SeqA family. In terms of assembly, homodimer. Polymerizes to form helical filaments.

It localises to the cytoplasm. Negative regulator of replication initiation, which contributes to regulation of DNA replication and ensures that replication initiation occurs exactly once per chromosome per cell cycle. Binds to pairs of hemimethylated GATC sequences in the oriC region, thus preventing assembly of replication proteins and re-initiation at newly replicated origins. Repression is relieved when the region becomes fully methylated. In Psychromonas ingrahamii (strain DSM 17664 / CCUG 51855 / 37), this protein is Negative modulator of initiation of replication.